We begin with the raw amino-acid sequence, 626 residues long: Acetolactate synthase large subunit (626 aa).

A compositionally biased stretch (polar residues) spans 1-13 (MNVAASQQPTPAT). The disordered stretch occupies residues 1 to 23 (MNVAASQQPTPATVASRGRSAAP). Glu-73 contacts thiamine diphosphate. FAD contacts are provided by residues Arg-175, 281-302 (HGTV…IGSR), and 324-343 (DIDP…IVGD). The tract at residues 416-496 (QHQMWAAQFV…IKIALINNGN (81 aa)) is thiamine pyrophosphate binding. Positions 467 and 494 each coordinate Mg(2+).

This sequence belongs to the TPP enzyme family. As to quaternary structure, dimer of large and small chains. Requires Mg(2+) as cofactor. Thiamine diphosphate is required as a cofactor.

The enzyme catalyses 2 pyruvate + H(+) = (2S)-2-acetolactate + CO2. It participates in amino-acid biosynthesis; L-isoleucine biosynthesis; L-isoleucine from 2-oxobutanoate: step 1/4. It functions in the pathway amino-acid biosynthesis; L-valine biosynthesis; L-valine from pyruvate: step 1/4. The chain is Acetolactate synthase large subunit (ilvB) from Corynebacterium glutamicum (strain ATCC 13032 / DSM 20300 / JCM 1318 / BCRC 11384 / CCUG 27702 / LMG 3730 / NBRC 12168 / NCIMB 10025 / NRRL B-2784 / 534).